The primary structure comprises 70 residues: Large ribosomal subunit protein uL29 (70 aa).

The protein belongs to the universal ribosomal protein uL29 family.

This is Large ribosomal subunit protein uL29 from Prochlorococcus marinus (strain MIT 9303).